Here is a 99-residue protein sequence, read N- to C-terminus: MNSNEKIFSVLRAPRVSEKTARLQELSNQYVFEVSNEATKADVKAAVEQLFDVKVEAVNVVNVKGKNKSFRNRAGRRGDWRKAYVRLADGQSIDVTAKA.

Belongs to the universal ribosomal protein uL23 family. As to quaternary structure, part of the 50S ribosomal subunit. Contacts protein L29, and trigger factor when it is bound to the ribosome.

Its function is as follows. One of the early assembly proteins it binds 23S rRNA. One of the proteins that surrounds the polypeptide exit tunnel on the outside of the ribosome. Forms the main docking site for trigger factor binding to the ribosome. This is Large ribosomal subunit protein uL23 from Stenotrophomonas maltophilia (strain R551-3).